Reading from the N-terminus, the 248-residue chain is Pulmonary surfactant-associated protein A1 (248 aa).

The N-terminal stretch at 1–20 (MWLCPLALNLILMAASGAVC) is a signal peptide. Residues 28–100 (GSPGIPGTPG…PGERGPPGLP (73 aa)) enclose the Collagen-like domain. 4-hydroxyproline occurs at positions 30, 33, 36, 42, 54, 57, 63, 67, and 70. Residues 31–101 (GIPGTPGSHG…GERGPPGLPA (71 aa)) form a disordered region. A compositionally biased stretch (basic and acidic residues) spans 42–51 (PGRDGRDGLK). A compositionally biased stretch (pro residues) spans 54–70 (PGPPGPMGPPGEMPCPP). Positions 132 to 248 (MTVGEKVFSS…LYSRLTICEF (117 aa)) constitute a C-type lectin domain. Disulfide bonds link Cys-155–Cys-246 and Cys-224–Cys-238. N-linked (GlcNAc...) asparagine glycosylation occurs at Asn-207.

It belongs to the SFTPA family. In terms of assembly, oligomeric complex of 6 set of homotrimers. Interacts with CD93. As to quaternary structure, (Microbial infection) Binds M.bovis cell surface protein Apa via its glycosylated sites; probably also recognizes other bacterial moieties. (Microbial infection) Binds to the S.aureus extracellular adherence protein, Eap, thereby enhancing phagocytosis and killing of S.aureus by alveolar macrophages. In terms of assembly, (Microbial infection) Interacts with M.pneumoniae CARDS toxin; CARDS probably uses this protein as a receptor. Post-translationally, N-acetylated.

It localises to the secreted. Its subcellular location is the extracellular space. The protein localises to the extracellular matrix. It is found in the surface film. In presence of calcium ions, it binds to surfactant phospholipids and contributes to lower the surface tension at the air-liquid interface in the alveoli of the mammalian lung and is essential for normal respiration. Enhances the expression of MYO18A/SP-R210 on alveolar macrophages. Functionally, (Microbial infection) Recognition of M.tuberculosis by dendritic cells may occur partially via this molecule. Can recognize, bind, and opsonize pathogens to enhance their elimination by alveolar macrophages. Its function is as follows. (Microbial infection) Binds M.pneumoniae CARDS toxin, serves as one receptor for this pathogen. When SFTPA1 is down-regulated by siRNA, less toxin binds to human cells and less vacuolization (a symptom of M.pneumoniae infection) is seen. This Homo sapiens (Human) protein is Pulmonary surfactant-associated protein A1 (SFTPA1).